The chain runs to 391 residues: MVAAKTIKSLVDKADLPDNIKEELYNKLIEYNKKYKFKKAEVEAIIEETVKEYQNSLVEPGEAIGTVAAQSIGEPSTQMTLNTFHYAGVAEINVTLGLPRIIEIVDARKNPSTPIMTVYLDEKHRYDREKALEVARRIEGTTLENLAREMSIDILNFEFIVEIDPERLEKSGLDMEKIQKKLESSFKSAEFEVDGYTLIMRPKKVTKLSDLRRLSEKVKKHRLKGLSGVGKTIIRKEGDEYVIYTEGSNFKQILKVPGVDPTRTRTNNIHEIAEVLGIEAARNAIIEEIVNTMRDQGLEVDVRHIMLVADMMTLDGVILPIGRHGIVGEKASVLARAAFEITTQHLFEAAERGETDPLNGVVENVLIGQPVPVGTGIVKLAMNLPLRPKRE.

Belongs to the RNA polymerase beta' chain family. As to quaternary structure, part of the RNA polymerase complex.

The protein resides in the cytoplasm. It carries out the reaction RNA(n) + a ribonucleoside 5'-triphosphate = RNA(n+1) + diphosphate. DNA-dependent RNA polymerase (RNAP) catalyzes the transcription of DNA into RNA using the four ribonucleoside triphosphates as substrates. Forms part of the jaw domain. This Thermococcus onnurineus (strain NA1) protein is DNA-directed RNA polymerase subunit Rpo1C.